Reading from the N-terminus, the 343-residue chain is Holliday junction branch migration complex subunit RuvB (343 aa).

Positions 1 to 181 (MDRIIDTAAT…FGIVQRLEFY (181 aa)) are large ATPase domain (RuvB-L). Residues I20, R21, G62, K65, T66, T67, 128-130 (EDF), R171, Y181, and R218 each bind ATP. Residue T66 participates in Mg(2+) binding. The tract at residues 182-252 (SPEDLARIVR…VAQAAMQMLK (71 aa)) is small ATPAse domain (RuvB-S). The head domain (RuvB-H) stretch occupies residues 255–343 (QGGFDELDRR…SAFTDPEDLF (89 aa)). Residues R291, R310, and R315 each contribute to the DNA site.

Belongs to the RuvB family. In terms of assembly, homohexamer. Forms an RuvA(8)-RuvB(12)-Holliday junction (HJ) complex. HJ DNA is sandwiched between 2 RuvA tetramers; dsDNA enters through RuvA and exits via RuvB. An RuvB hexamer assembles on each DNA strand where it exits the tetramer. Each RuvB hexamer is contacted by two RuvA subunits (via domain III) on 2 adjacent RuvB subunits; this complex drives branch migration. In the full resolvosome a probable DNA-RuvA(4)-RuvB(12)-RuvC(2) complex forms which resolves the HJ.

The protein resides in the cytoplasm. It catalyses the reaction ATP + H2O = ADP + phosphate + H(+). The RuvA-RuvB-RuvC complex processes Holliday junction (HJ) DNA during genetic recombination and DNA repair, while the RuvA-RuvB complex plays an important role in the rescue of blocked DNA replication forks via replication fork reversal (RFR). RuvA specifically binds to HJ cruciform DNA, conferring on it an open structure. The RuvB hexamer acts as an ATP-dependent pump, pulling dsDNA into and through the RuvAB complex. RuvB forms 2 homohexamers on either side of HJ DNA bound by 1 or 2 RuvA tetramers; 4 subunits per hexamer contact DNA at a time. Coordinated motions by a converter formed by DNA-disengaged RuvB subunits stimulates ATP hydrolysis and nucleotide exchange. Immobilization of the converter enables RuvB to convert the ATP-contained energy into a lever motion, pulling 2 nucleotides of DNA out of the RuvA tetramer per ATP hydrolyzed, thus driving DNA branch migration. The RuvB motors rotate together with the DNA substrate, which together with the progressing nucleotide cycle form the mechanistic basis for DNA recombination by continuous HJ branch migration. Branch migration allows RuvC to scan DNA until it finds its consensus sequence, where it cleaves and resolves cruciform DNA. This is Holliday junction branch migration complex subunit RuvB from Xylella fastidiosa (strain 9a5c).